The primary structure comprises 38 residues: Photosystem II reaction center protein Y (38 aa).

Topologically, residues 1 to 4 (MSMR) are lumenal. The chain crosses the membrane as a helical span at residues 5–23 (LVVVLLPLGIALGWAVYNI). Over 24-38 (GKLAIEQWRRTGSKV) the chain is Stromal.

This sequence belongs to the PsbY family. In terms of assembly, PSII is composed of 1 copy each of membrane proteins PsbA, PsbB, PsbC, PsbD, PsbE, PsbF, PsbH, PsbI, PsbJ, PsbK, PsbL, PsbM, PsbT, PsbX, PsbY, PsbZ, Psb30/Ycf12, at least 3 peripheral proteins of the oxygen-evolving complex and a large number of cofactors. It forms dimeric complexes.

The protein localises to the plastid. It localises to the cyanelle thylakoid membrane. Functionally, loosely associated component of the core of photosystem II (PSII), it is not always seen in crystals. PSII is a light-driven water plastoquinone oxidoreductase, using light energy to abstract electrons from H(2)O, generating a proton gradient subsequently used for ATP formation. This is Photosystem II reaction center protein Y from Cyanophora paradoxa.